Here is a 442-residue protein sequence, read N- to C-terminus: Yes-associated protein homolog 1 (442 aa).

Basic residues predominate over residues 1-10 (MASKSIHKKH). The segment at 1–84 (MASKSIHKKH…GSVDESSRTA (84 aa)) is disordered. 2 stretches are compositionally biased toward polar residues: residues 13–22 (NSQQDKNQFS) and 55–71 (LPSS…SSAH). Ser104 is subject to Phosphoserine. Residues 108 to 120 (LHTSVNNGQSSAT) are compositionally biased toward polar residues. The tract at residues 108–136 (LHTSVNNGQSSATVPHPSHHNVHHQHSKS) is disordered. Over residues 124-134 (PSHHNVHHQHS) the composition is skewed to basic residues. The 34-residue stretch at 203–236 (LPMPQGWEMCYDSDGVRYFKDHNSKTTTWDDPRL) folds into the WW domain.

It belongs to the YAP1 family. Highly divergent. As to quaternary structure, interacts (via WW domain) with wts-1 (via N-terminus). Interacts (via WW domain) with egl-44; the interaction may regulate transcription. Expressed in epithelia, hypodermis, muscles, pharynx, intestine, gonadal sheath cells, vulva, spermatheca and in excretory tissue.

It localises to the cytoplasm. It is found in the nucleus. The protein resides in the cell projection. The protein localises to the cilium. Its subcellular location is the cytoskeleton. It localises to the cilium axoneme. In terms of biological role, plays a role in thermal stress response and in aging. In Caenorhabditis elegans, this protein is Yes-associated protein homolog 1.